We begin with the raw amino-acid sequence, 317 residues long: Adenine deaminase (317 aa).

Zn(2+) is bound by residues His-14, His-16, and His-194. Glu-197 (proton donor) is an active-site residue. Position 275 (Asp-275) interacts with Zn(2+). Asp-276 provides a ligand contact to substrate.

The protein belongs to the metallo-dependent hydrolases superfamily. Adenosine and AMP deaminases family. Adenine deaminase type 2 subfamily. Zn(2+) serves as cofactor.

It carries out the reaction adenine + H2O + H(+) = hypoxanthine + NH4(+). In terms of biological role, catalyzes the hydrolytic deamination of adenine to hypoxanthine. Plays an important role in the purine salvage pathway and in nitrogen catabolism. This chain is Adenine deaminase, found in Pseudomonas savastanoi pv. phaseolicola (strain 1448A / Race 6) (Pseudomonas syringae pv. phaseolicola (strain 1448A / Race 6)).